Reading from the N-terminus, the 117-residue chain is Large ribosomal subunit protein bL20c (117 aa).

Belongs to the bacterial ribosomal protein bL20 family.

It localises to the plastid. Its subcellular location is the chloroplast. Functionally, binds directly to 23S ribosomal RNA and is necessary for the in vitro assembly process of the 50S ribosomal subunit. It is not involved in the protein synthesizing functions of that subunit. The sequence is that of Large ribosomal subunit protein bL20c from Arabis hirsuta (Hairy rock-cress).